Here is a 210-residue protein sequence, read N- to C-terminus: Chaperone protein TorD (210 aa).

Belongs to the TorD/DmsD family. TorD subfamily.

The protein resides in the cytoplasm. Functionally, involved in the biogenesis of TorA. Acts on TorA before the insertion of the molybdenum cofactor and, as a result, probably favors a conformation of the apoenzyme that is competent for acquiring the cofactor. This Salmonella choleraesuis (strain SC-B67) protein is Chaperone protein TorD.